Reading from the N-terminus, the 132-residue chain is MTMTDPIADFLTRLRNANTAYHDEVKLPHSKIKANIAEILKREGYIADYRTEDAEVGKTLIVDLKYGPSRERSLAGVRRVSKPGLRVYAKSTNLPKVLGGLGVAIISTSTGLLTDRQAANQGVGGEVLAYVW.

This sequence belongs to the universal ribosomal protein uS8 family. As to quaternary structure, part of the 30S ribosomal subunit. Contacts proteins S5 and S12.

One of the primary rRNA binding proteins, it binds directly to 16S rRNA central domain where it helps coordinate assembly of the platform of the 30S subunit. This is Small ribosomal subunit protein uS8 from Rhodococcus jostii (strain RHA1).